The sequence spans 260 residues: 3-dehydroquinate dehydratase (260 aa).

3-dehydroquinate contacts are provided by residues 50-52 (EWR) and Arg86. Residue His148 is the Proton donor/acceptor of the active site. Residue Lys175 is the Schiff-base intermediate with substrate of the active site. 3 residues coordinate 3-dehydroquinate: Arg217, Ser236, and Gln240.

Belongs to the type-I 3-dehydroquinase family. In terms of assembly, homodimer.

The enzyme catalyses 3-dehydroquinate = 3-dehydroshikimate + H2O. It participates in metabolic intermediate biosynthesis; chorismate biosynthesis; chorismate from D-erythrose 4-phosphate and phosphoenolpyruvate: step 3/7. In terms of biological role, involved in the third step of the chorismate pathway, which leads to the biosynthesis of aromatic amino acids. Catalyzes the cis-dehydration of 3-dehydroquinate (DHQ) and introduces the first double bond of the aromatic ring to yield 3-dehydroshikimate. The chain is 3-dehydroquinate dehydratase from Aromatoleum aromaticum (strain DSM 19018 / LMG 30748 / EbN1) (Azoarcus sp. (strain EbN1)).